A 158-amino-acid chain; its full sequence is Lectin-like protein EP153R (158 aa).

At 1 to 26 (MFLNKKYPSLIEKKMDDLMTLKFCYL) the chain is on the cytoplasmic side. A helical transmembrane segment spans residues 27–47 (IITFLIITNIFSLAINIWGGG). Topologically, residues 48–158 (DMIDRQSCEN…YTETFFICSN (111 aa)) are extracellular. Residues Cys-61 and Cys-72 are joined by a disulfide bond. The segment at 61 to 157 (CPKDWVGYNN…KYTETFFICS (97 aa)) is lectin-like. Asn-81, Asn-94, Asn-100, Asn-106, Asn-112, Asn-119, and Asn-139 each carry an N-linked (GlcNAc...) asparagine; by host glycan.

It belongs to the asfivirus lectin-like protein family. In terms of assembly, homodimer.

The protein resides in the host endoplasmic reticulum membrane. In terms of biological role, down-regulates MHC-I expression by impairing the appropriate configuration or presentation into the plasma membrane of the latter. Participates in viral hemadsorption, which may help viral spread. Reduces the transactivating activity of host TP53, thus inhibiting apoptosis. Non-essential for virus growth in swine macrophage cell cultures. The protein is Lectin-like protein EP153R of African swine fever virus (isolate Pig/Kenya/KEN-50/1950) (ASFV).